Reading from the N-terminus, the 420-residue chain is PHO85 cyclin-6 (420 aa).

Disordered stretches follow at residues 1-82 (MSIK…ESSF), 134-155 (QGTHTVQSSTQEDKILDGDTSN), and 268-321 (VTTT…GVQR). Residues 7–22 (SPSSTNASSSPKSTYS) show a composition bias toward low complexity. A Phosphoserine modification is found at Ser-61. Over residues 134–143 (QGTHTVQSST) the composition is skewed to polar residues. Basic and acidic residues predominate over residues 277 to 296 (AKHESPSNESSLDKANRGAD). Residues Ser-281 and Ser-312 each carry the phosphoserine modification. Positions 307–316 (NENDDSDDEN) are enriched in acidic residues. Position 317 is a phosphothreonine (Thr-317).

It belongs to the cyclin family. PHO80 subfamily. In terms of assembly, forms a cyclin-CDK complex with PHO85. Interacts with the substrate protein YJL084C. Interacts with elongin-C, which stabilizes PCL6. Interacts with the CDK inhibitor (CKI) PHO81.

The protein localises to the cytoplasm. Its subcellular location is the nucleus. Its function is as follows. Cyclin partner of the cyclin-dependent kinase (CDK) PHO85. Together with cyclin PCL7, controls glycogen phosphorylase and glycogen synthase activities in response to nutrient availablility. The PCL6-PHO85 cyclin-CDK holoenzyme has GLC8 kinase activity and phosphorylates and inactivates the phosphatase PP1-2 inhibitor GLC8, causing activation of PP1-2, which then dephosphorylates and activates glycogen phosphorylase. PCL6-PHO85 also phosphorylates YJL084C. The chain is PHO85 cyclin-6 (PCL6) from Saccharomyces cerevisiae (strain ATCC 204508 / S288c) (Baker's yeast).